The following is a 483-amino-acid chain: Spermatogenesis-defective protein 39 homolog (483 aa).

The protein belongs to the SPE39 family. As to quaternary structure, interacts with vps33b. As to expression, high levels detected in liver and small intestine of larvae at 5 days post-fertilization.

Its subcellular location is the cytoplasm. It localises to the cytoplasmic vesicle. The protein resides in the early endosome. It is found in the recycling endosome. The protein localises to the late endosome. In terms of biological role, proposed to be involved in endosomal maturation implicating in part vps33b. In epithelial cells, the vps33b:vipas39 complex may play a role in the apical rab11a-dependent recycling pathway and in the maintenance of the apical-basolateral polarity. May play a role in lysosomal trafficking, probably via association with the core HOPS complex in a discrete population of endosomes; the functions seems to be independent of vps33b. May play a role in vesicular trafficking during spermatogenesis. May be involved in direct or indirect transcriptional regulation of E-cadherin. This is Spermatogenesis-defective protein 39 homolog (vipas39) from Danio rerio (Zebrafish).